Reading from the N-terminus, the 321-residue chain is o-succinylbenzoate synthase (321 aa).

The active-site Proton donor is the Lys134. Mg(2+) contacts are provided by Asp162, Glu191, and Asp214. Residue Lys236 is the Proton acceptor of the active site.

The protein belongs to the mandelate racemase/muconate lactonizing enzyme family. MenC type 1 subfamily. A divalent metal cation serves as cofactor.

The catalysed reaction is (1R,6R)-6-hydroxy-2-succinyl-cyclohexa-2,4-diene-1-carboxylate = 2-succinylbenzoate + H2O. The protein operates within quinol/quinone metabolism; 1,4-dihydroxy-2-naphthoate biosynthesis; 1,4-dihydroxy-2-naphthoate from chorismate: step 4/7. It participates in quinol/quinone metabolism; menaquinone biosynthesis. Converts 2-succinyl-6-hydroxy-2,4-cyclohexadiene-1-carboxylate (SHCHC) to 2-succinylbenzoate (OSB). This chain is o-succinylbenzoate synthase, found in Enterobacter sp. (strain 638).